A 1035-amino-acid polypeptide reads, in one-letter code: Kinesin-like protein KIN-4A (1035 aa).

A Kinesin motor domain is found at 11 to 370; sequence SVKVAVHIRP…LKYANRARNI (360 aa). ATP is bound at residue 90–97; it reads GQTGSGKT. Coiled-coil stretches lie at residues 408-436, 504-707, and 881-911; these read CAEV…HEYR, QNSM…RKSS, and KEIV…IATS. The disordered stretch occupies residues 704 to 724; the sequence is RKSSPREHSAGTNGFGTNGQT.

It belongs to the TRAFAC class myosin-kinesin ATPase superfamily. Kinesin family. KIN-4 subfamily. Homodimer. In terms of tissue distribution, expressed in stems and flowers. Detected in cells undergoing secondary wall deposition including developing interfascicular fibers and xylem cells, but also in dividing cells and expanding/elongating parenchyma cells.

It is found in the cytoplasm. It localises to the cytoskeleton. In terms of biological role, kinesin-like motor protein involved in the control of the oriented deposition of cellulose microfibrils. Its motor activity is directed toward the microtubule's plus end. It possesses the potential to drive long-distance transport of cargo along cortical microtubules. Regulates cell wall mechanics during cell elongation, by the regulation of primary and secondary walls deposition. Contributes to cortical microtubule-mediated trafficking of cell wall components. This chain is Kinesin-like protein KIN-4A, found in Arabidopsis thaliana (Mouse-ear cress).